The chain runs to 172 residues: MERAEKREFVTELNEVFKASGSVVVAHYAGVTVAQMNDFRSKMRAAGGTVKVAKNRLAKIALQGTESEGMTNLFKGQTLIAYSVDPMIAPKVVMDFAKTNDKVVVLGGSMGATTLNAEAVKSLATLPSLDELRAKLLGLLNAPATRVATVVAAPASQLARVFSAYAKKDEAA.

The protein belongs to the universal ribosomal protein uL10 family. As to quaternary structure, part of the ribosomal stalk of the 50S ribosomal subunit. The N-terminus interacts with L11 and the large rRNA to form the base of the stalk. The C-terminus forms an elongated spine to which 3 L12 dimers bind in a sequential fashion forming a heptameric L10(L12)2(L12)2(L12)2 complex.

Its function is as follows. Forms part of the ribosomal stalk, playing a central role in the interaction of the ribosome with GTP-bound translation factors. This Agrobacterium fabrum (strain C58 / ATCC 33970) (Agrobacterium tumefaciens (strain C58)) protein is Large ribosomal subunit protein uL10.